A 249-amino-acid polypeptide reads, in one-letter code: 23S rRNA (guanosine-2'-O-)-methyltransferase RlmB (249 aa).

3 residues coordinate S-adenosyl-L-methionine: glycine 200, isoleucine 220, and leucine 229.

Belongs to the class IV-like SAM-binding methyltransferase superfamily. RNA methyltransferase TrmH family. RlmB subfamily.

Its subcellular location is the cytoplasm. The catalysed reaction is guanosine(2251) in 23S rRNA + S-adenosyl-L-methionine = 2'-O-methylguanosine(2251) in 23S rRNA + S-adenosyl-L-homocysteine + H(+). Specifically methylates the ribose of guanosine 2251 in 23S rRNA. The polypeptide is 23S rRNA (guanosine-2'-O-)-methyltransferase RlmB (Xylella fastidiosa (strain 9a5c)).